Consider the following 593-residue polypeptide: Probable tripeptidyl-peptidase SED3 (593 aa).

An N-terminal signal peptide occupies residues 1-18 (MLLRWHSVIPLFLTMTVA). Positions 19–198 (LPNTYRTVVE…SLQVIYSSTN (180 aa)) are cleaved as a propeptide — removed in mature form. N-linked (GlcNAc...) asparagine glycans are attached at residues asparagine 198, asparagine 204, asparagine 261, and asparagine 275. In terms of domain architecture, Peptidase S53 spans 206-592 (TITPRCLREL…RILAKIVQHM (387 aa)). Residues glutamate 282 and aspartate 286 each act as charge relay system in the active site. Asparagine 295 is a glycosylation site (N-linked (GlcNAc...) asparagine). Serine 496 serves as the catalytic Charge relay system. Ca(2+) contacts are provided by aspartate 538 and isoleucine 539. 2 N-linked (GlcNAc...) asparagine glycosylation sites follow: asparagine 554 and asparagine 566. The Ca(2+) site is built by glycine 570 and aspartate 572.

Requires Ca(2+) as cofactor.

Its subcellular location is the secreted. It localises to the extracellular space. It catalyses the reaction Release of an N-terminal tripeptide from a polypeptide.. Secreted tripeptidyl-peptidase which degrades proteins at acidic pHs and is involved in virulence. In Trichophyton verrucosum (strain HKI 0517), this protein is Probable tripeptidyl-peptidase SED3 (SED3).